The following is a 101-amino-acid chain: uncharacterized protein (101 aa).

The first 21 residues, 1 to 21, serve as a signal peptide directing secretion; that stretch reads MKLSTCCAALLLALASPAVLA. Polar residues predominate over residues 79 to 94; it reads RTTSGNVSAPAQSSQD. Residues 79 to 101 form a disordered region; sequence RTTSGNVSAPAQSSQDGAPAEPQ.

This is an uncharacterized protein from Escherichia coli (strain K12).